A 185-amino-acid polypeptide reads, in one-letter code: Probable RNA polymerase sigma-C factor (185 aa).

Residues 52–65 (DLTQETFLRAIGAI) carry the Polymerase core binding motif. A DNA-binding region (H-T-H motif) is located at residues 149 to 168 (YADAAAVCGCPVGTIRSRVA).

The protein belongs to the sigma-70 factor family. ECF subfamily.

Its function is as follows. Sigma factors are initiation factors that promote the attachment of RNA polymerase to specific initiation sites and are then released. This chain is Probable RNA polymerase sigma-C factor (sigC), found in Mycobacterium bovis (strain ATCC BAA-935 / AF2122/97).